The chain runs to 117 residues: UPF0342 protein Bcer98_0695 (117 aa).

It belongs to the UPF0342 family.

The polypeptide is UPF0342 protein Bcer98_0695 (Bacillus cytotoxicus (strain DSM 22905 / CIP 110041 / 391-98 / NVH 391-98)).